A 351-amino-acid chain; its full sequence is Adenine deaminase (351 aa).

Zn(2+)-binding residues include His-19, His-21, and His-208. The active-site Proton donor is the Glu-211. Zn(2+) is bound at residue Asp-288. Asp-289 is a substrate binding site.

It belongs to the metallo-dependent hydrolases superfamily. Adenosine and AMP deaminases family. Adenine deaminase type 2 subfamily. Requires Zn(2+) as cofactor.

The protein resides in the cytoplasm. Its subcellular location is the nucleus. It catalyses the reaction adenine + H2O + H(+) = hypoxanthine + NH4(+). Catalyzes the hydrolytic deamination of adenine to hypoxanthine. Plays an important role in the purine salvage pathway and in nitrogen catabolism. The protein is Adenine deaminase (aah1) of Aspergillus oryzae (strain ATCC 42149 / RIB 40) (Yellow koji mold).